We begin with the raw amino-acid sequence, 621 residues long: Glutamyl-tRNA(Gln) amidotransferase subunit B, mitochondrial (621 aa).

The N-terminal 41 residues, 1 to 41 (MARLPTTELRKYLLTGQFTRRGCLHLRPSPLAPPIPPLRTL), are a transit peptide targeting the mitochondrion. 2 disordered regions span residues 26 to 86 (LRPS…DNQT) and 106 to 136 (SKLF…APFD). Low complexity-rich tracts occupy residues 38 to 57 (LRTL…QIIP) and 110 to 120 (SPASTPSSSSD).

This sequence belongs to the GatB/GatE family. GatB subfamily. In terms of assembly, subunit of the heterotrimeric GatCAB amidotransferase (AdT) complex, composed of A, B and C subunits.

The protein resides in the mitochondrion. The catalysed reaction is L-glutamyl-tRNA(Gln) + L-glutamine + ATP + H2O = L-glutaminyl-tRNA(Gln) + L-glutamate + ADP + phosphate + H(+). Allows the formation of correctly charged Gln-tRNA(Gln) through the transamidation of misacylated Glu-tRNA(Gln) in the mitochondria. The reaction takes place in the presence of glutamine and ATP through an activated gamma-phospho-Glu-tRNA(Gln). The sequence is that of Glutamyl-tRNA(Gln) amidotransferase subunit B, mitochondrial from Podospora anserina (strain S / ATCC MYA-4624 / DSM 980 / FGSC 10383) (Pleurage anserina).